The sequence spans 149 residues: MQSLQVKILDERMRDQLPSYGTPGSAGLDLRACIDEAIEIVPGQTVLVPTGLAIYVEDPRYAAFILPRSGLGHKHGIVLGNLVGLIDSDYQGQLMVSTWNRGSNPFKLEPMERLAQLVVMPIQQVELKVVEEFTESSRGAGGFGSTGRT.

Substrate is bound by residues 68-70 (RSG), Asn81, 85-87 (LID), and Met95.

The protein belongs to the dUTPase family. Requires Mg(2+) as cofactor.

The enzyme catalyses dUTP + H2O = dUMP + diphosphate + H(+). It participates in pyrimidine metabolism; dUMP biosynthesis; dUMP from dCTP (dUTP route): step 2/2. Its function is as follows. This enzyme is involved in nucleotide metabolism: it produces dUMP, the immediate precursor of thymidine nucleotides and it decreases the intracellular concentration of dUTP so that uracil cannot be incorporated into DNA. The protein is Deoxyuridine 5'-triphosphate nucleotidohydrolase of Polynucleobacter asymbioticus (strain DSM 18221 / CIP 109841 / QLW-P1DMWA-1) (Polynucleobacter necessarius subsp. asymbioticus).